Reading from the N-terminus, the 138-residue chain is ATP synthase epsilon chain (138 aa).

This sequence belongs to the ATPase epsilon chain family. F-type ATPases have 2 components, CF(1) - the catalytic core - and CF(0) - the membrane proton channel. CF(1) has five subunits: alpha(3), beta(3), gamma(1), delta(1), epsilon(1). CF(0) has three main subunits: a, b and c.

Its subcellular location is the cell membrane. Its function is as follows. Produces ATP from ADP in the presence of a proton gradient across the membrane. This chain is ATP synthase epsilon chain, found in Streptococcus pyogenes serotype M2 (strain MGAS10270).